A 145-amino-acid chain; its full sequence is MAEVEQKKKRTFRKFTYRGVDLDQLLDMSYEQLMQLYSARQRRRLNRGLRRKQHSLLKRLRKAKKDAPPMEKPEVVKTHLRDMIILPEMVGSMVGVYNGKTFNQVEIKPEMIGHYLGEFSITYKPVKHGRPGIGATHSSRFIPLK.

Position 2 is an N-acetylalanine (A2). K108 is covalently cross-linked (Glycyl lysine isopeptide (Lys-Gly) (interchain with G-Cter in SUMO2)).

It belongs to the universal ribosomal protein uS19 family. As to quaternary structure, component of the small ribosomal subunit.

Its subcellular location is the cytoplasm. Component of the small ribosomal subunit. The ribosome is a large ribonucleoprotein complex responsible for the synthesis of proteins in the cell. This is Small ribosomal subunit protein uS19 (RPS15) from Bos taurus (Bovine).